The primary structure comprises 289 residues: MKFAKGHGTQNDFVLLPDLTADLALTPAAVAALCDRRQGLGADGVLRVTTAGAARAAGVFDRLPEGVVEGDWYMDYRNADGSIAQMCGNGVRVFAHYLRASGLESRDEFVVGSLAGPRPVVLNALAGVGADVTVEMGKANQLGVGAATVGGRQFNGLAVDVGNPHLACVDAAMSSRELAALDVAAPVVFDAAQFPDGVNVEVLTAPEDGAVSMRVHERGVGETRSCGTGTVAAAVAALAHQGSQTGSLTVRIPGGEVVVTITDANSYLRGPSVLVAHGDLADEWWAAQG.

2 residues coordinate substrate: asparagine 11 and asparagine 78. Residue cysteine 87 is the Proton donor of the active site. Residues 88–89, asparagine 163, asparagine 199, and 217–218 each bind substrate; these read GN and ER. Cysteine 226 (proton acceptor) is an active-site residue. A substrate-binding site is contributed by 227–228; that stretch reads GT.

It belongs to the diaminopimelate epimerase family. Homodimer.

The protein localises to the cytoplasm. The catalysed reaction is (2S,6S)-2,6-diaminopimelate = meso-2,6-diaminopimelate. The protein operates within amino-acid biosynthesis; L-lysine biosynthesis via DAP pathway; DL-2,6-diaminopimelate from LL-2,6-diaminopimelate: step 1/1. Catalyzes the stereoinversion of LL-2,6-diaminopimelate (L,L-DAP) to meso-diaminopimelate (meso-DAP), a precursor of L-lysine and an essential component of the bacterial peptidoglycan. The polypeptide is Diaminopimelate epimerase (Mycolicibacterium vanbaalenii (strain DSM 7251 / JCM 13017 / BCRC 16820 / KCTC 9966 / NRRL B-24157 / PYR-1) (Mycobacterium vanbaalenii)).